The following is a 190-amino-acid chain: Large ribosomal subunit protein uL5 (190 aa).

Belongs to the universal ribosomal protein uL5 family. In terms of assembly, part of the 50S ribosomal subunit; part of the 5S rRNA/L5/L18/L25 subcomplex. Contacts the 5S rRNA and the P site tRNA. Forms a bridge to the 30S subunit in the 70S ribosome.

In terms of biological role, this is one of the proteins that bind and probably mediate the attachment of the 5S RNA into the large ribosomal subunit, where it forms part of the central protuberance. In the 70S ribosome it contacts protein S13 of the 30S subunit (bridge B1b), connecting the 2 subunits; this bridge is implicated in subunit movement. Contacts the P site tRNA; the 5S rRNA and some of its associated proteins might help stabilize positioning of ribosome-bound tRNAs. The protein is Large ribosomal subunit protein uL5 of Bifidobacterium adolescentis (strain ATCC 15703 / DSM 20083 / NCTC 11814 / E194a).